The sequence spans 544 residues: CTP synthase (544 aa).

Residues 1–266 (MATNYIFVTG…DDFVCDRFRL (266 aa)) are amidoligase domain. Ser-14 contacts CTP. Ser-14 contacts UTP. ATP contacts are provided by residues 15-20 (SLGKGI) and Asp-72. Mg(2+) contacts are provided by Asp-72 and Glu-140. CTP is bound by residues 147 to 149 (DIE), 187 to 192 (KTKPTQ), and Lys-223. Residues 187–192 (KTKPTQ) and Lys-223 contribute to the UTP site. ATP is bound at residue 239–241 (KDV). Residues 291–542 (TIGMVGKYVE…VKAAKEHQGK (252 aa)) form the Glutamine amidotransferase type-1 domain. Gly-352 serves as a coordination point for L-glutamine. Catalysis depends on Cys-379, which acts as the Nucleophile; for glutamine hydrolysis. L-glutamine is bound by residues 380-383 (LGMQ), Glu-403, and Arg-470. Residues His-515 and Glu-517 contribute to the active site.

The protein belongs to the CTP synthase family. In terms of assembly, homotetramer.

It carries out the reaction UTP + L-glutamine + ATP + H2O = CTP + L-glutamate + ADP + phosphate + 2 H(+). The enzyme catalyses L-glutamine + H2O = L-glutamate + NH4(+). The catalysed reaction is UTP + NH4(+) + ATP = CTP + ADP + phosphate + 2 H(+). It functions in the pathway pyrimidine metabolism; CTP biosynthesis via de novo pathway; CTP from UDP: step 2/2. With respect to regulation, allosterically activated by GTP, when glutamine is the substrate; GTP has no effect on the reaction when ammonia is the substrate. The allosteric effector GTP functions by stabilizing the protein conformation that binds the tetrahedral intermediate(s) formed during glutamine hydrolysis. Inhibited by the product CTP, via allosteric rather than competitive inhibition. Catalyzes the ATP-dependent amination of UTP to CTP with either L-glutamine or ammonia as the source of nitrogen. Regulates intracellular CTP levels through interactions with the four ribonucleotide triphosphates. The protein is CTP synthase of Glaesserella parasuis serovar 5 (strain SH0165) (Haemophilus parasuis).